Reading from the N-terminus, the 124-residue chain is Small ribosomal subunit protein uS12 (124 aa).

Residues 1–42 are disordered; the sequence is MPTIQQLVRKGRRPKVNKTKSPALRGNPQQRGVCSRVYTTTP. Basic residues predominate over residues 9 to 18; it reads RKGRRPKVNK. Residues 27 to 42 are compositionally biased toward polar residues; it reads NPQQRGVCSRVYTTTP. A 3-methylthioaspartic acid modification is found at Asp-89.

It belongs to the universal ribosomal protein uS12 family. As to quaternary structure, part of the 30S ribosomal subunit. Contacts proteins S8 and S17. May interact with IF1 in the 30S initiation complex.

With S4 and S5 plays an important role in translational accuracy. Its function is as follows. Interacts with and stabilizes bases of the 16S rRNA that are involved in tRNA selection in the A site and with the mRNA backbone. Located at the interface of the 30S and 50S subunits, it traverses the body of the 30S subunit contacting proteins on the other side and probably holding the rRNA structure together. The combined cluster of proteins S8, S12 and S17 appears to hold together the shoulder and platform of the 30S subunit. The sequence is that of Small ribosomal subunit protein uS12 from Tropheryma whipplei (strain TW08/27) (Whipple's bacillus).